The following is a 416-amino-acid chain: Probable histone-binding protein lin-53 (416 aa).

WD repeat units follow at residues N118–K158, G170–G210, G220–A260, A263–H303, S307–T347, and G364–V404.

The protein belongs to the WD repeat RBAP46/RBAP48/MSI1 family. As to quaternary structure, binds directly to helix 1 of the histone fold of histone H4, a region that is not accessible when H4 is in chromatin. Probable component of a NuRD-like complex, composed of at least lin-53 and hda-1. Interacts with lin-35. Interacts with hda-1; the interaction is direct. Component of the DRM complex, at least composed of lin-9, lin-35, lin-37, lin-52, lin-53, lin-54- dpl-1 and efl-1. Interacts with hcp-3.

It localises to the nucleus. Its subcellular location is the chromosome. It is found in the centromere. Its function is as follows. Core histone-binding subunit that may target chromatin assembly factors, chromatin remodeling factors and histone deacetylases to their histone substrates in a manner that is regulated by nucleosomal DNA. Required for hcp-3 and his-1 stabilization, localization of hcp-3 to centromeres and for proper chromosome segregation. Synthetic multivulva class B (synMuvB) protein. SynMuvB proteins are required to repress the induction of vulval development by Ras signaling and probably act by forming the multiprotein DRM complex that represses transcription. This is Probable histone-binding protein lin-53 from Caenorhabditis briggsae.